Here is a 560-residue protein sequence, read N- to C-terminus: SET domain-containing protein 4 (560 aa).

Disordered stretches follow at residues 1–61 and 125–157; these read MTSP…PSPQ and KKQN…AEDN. Over residues 26 to 38 the composition is skewed to low complexity; that stretch reads SRSSSYSSNSSMS. Over residues 47 to 59 the composition is skewed to polar residues; that stretch reads LSVSSAASETLPS. Basic and acidic residues predominate over residues 141-157; sequence ESSKENKITPSMRAEDN. The segment at 160–210 adopts a PHD-type zinc-finger fold; sequence KNGCICGSSDSKDELFIQCNKCKTWQHKLCYAFKKSDPIKRDFVCKRCDSD. Residues 346 to 475 enclose the SET domain; the sequence is ADIEVRKSSN…KGEEISVEWQ (130 aa).

It belongs to the SET3 family.

Its function is as follows. Putative chromatin regulator. The protein is SET domain-containing protein 4 (SET4) of Saccharomyces cerevisiae (strain ATCC 204508 / S288c) (Baker's yeast).